Here is a 338-residue protein sequence, read N- to C-terminus: Glyceraldehyde-3-phosphate dehydrogenase (338 aa).

Residues 13–14 (RI), Asp-35, and Arg-80 each bind NAD(+). D-glyceraldehyde 3-phosphate-binding positions include 151–153 (SCT), Thr-182, 211–212 (TG), and Arg-234. Residue Cys-152 is the Nucleophile of the active site. Residue Asn-316 coordinates NAD(+).

This sequence belongs to the glyceraldehyde-3-phosphate dehydrogenase family. Homotetramer.

It is found in the cytoplasm. It catalyses the reaction D-glyceraldehyde 3-phosphate + phosphate + NAD(+) = (2R)-3-phospho-glyceroyl phosphate + NADH + H(+). Its pathway is carbohydrate degradation; glycolysis; pyruvate from D-glyceraldehyde 3-phosphate: step 1/5. This Sclerotinia sclerotiorum (White mold) protein is Glyceraldehyde-3-phosphate dehydrogenase (GPD).